The sequence spans 785 residues: SUN domain-containing protein 1 (785 aa).

The segment at 1–138 (MDFSRLHMYS…TRRPPVLDES (138 aa)) is LMNA-binding. Topologically, residues 1–288 (MDFSRLHMYS…VFLLTRCLRN (288 aa)) are nuclear. A phosphoserine mark is found at Ser48, Ser100, and Ser138. Residue Lys195 forms a Glycyl lysine isopeptide (Lys-Gly) (interchain with G-Cter in SUMO2) linkage. The SYNE2-binding stretch occupies residues 209–309 (SRVYSRDRNQ…FLLLAGLSLR (101 aa)). Positions 223–309 (LLQILRRIGA…FLLLAGLSLR (87 aa)) are EMD-binding. A helical transmembrane segment spans residues 289-308 (ICKFLVLLIPLFLLLAGLSL). Over 309–785 (RGQGNFFSFL…RFRVHGEPVK (477 aa)) the chain is Perinuclear space. A phosphoserine mark is found at Asp333 and Ser344. Residues 428-495 (HQEHEVRMSH…KSELSSWRHV (68 aa)) are a coiled coil. Residues 574–785 (TSEAVVSAVS…RFRVHGEPVK (212 aa)) are sufficient for interaction with SYNE1 and SYNE2. One can recognise an SUN domain in the interval 622-784 (GGSILSTRCS…YRFRVHGEPV (163 aa)).

In terms of assembly, core component of the LINC complex which is composed of inner nuclear membrane SUN domain-containing proteins coupled to outer nuclear membrane KASH domain-containing nesprins. SUN and KASH domain-containing proteins seem to bind each other promiscuously; however, differentially expression of LINC complex constituents is giving rise to specific assemblies. At least SUN1/2-containing core LINC complexes are proposed to be hexameric composed of three protomers of each KASH and SUN domain-containing protein. Interacts with KASH5 (via the last 22 amino acids); this interaction mediates KASH5 telomere localization by forming a SUN1:KASH5 LINC complex. May interact with SYNE3. Interacts with SYNE2 and SYNE1; probably forming respective LINC complexes. Interacts with A-type lamin with a strong preference for unprocessed A-type lamin compared with the mature protein. Interaction with lamins B1 and C is hardly detectable. Interacts with NAT10. Interacts with EMD and TSNAX. Associates with the nuclear pore complex (NPC). Interacts with CCDC79/TERB1; promoting the accumulation of the LINC complex complexes at the telomere-nuclear envelope attachment sites. Interacts (via KASH domain) with TMEM258. Post-translationally, the disulfide bond with KASH domain-containing nesprins is required for stability of the respective LINC complexes under tensile forces.

The protein localises to the nucleus inner membrane. As a component of the LINC (LInker of Nucleoskeleton and Cytoskeleton) complex involved in the connection between the nuclear lamina and the cytoskeleton. The nucleocytoplasmic interactions established by the LINC complex play an important role in the transmission of mechanical forces across the nuclear envelope and in nuclear movement and positioning. Required for interkinetic nuclear migration (INM) and essential for nucleokinesis and centrosome-nucleus coupling during radial neuronal migration in the cerebral cortex and during glial migration. Involved in telomere attachment to nuclear envelope in the prophase of meiosis implicating a SUN1/2:KASH5 LINC complex in which SUN1 and SUN2 seem to act at least partial redundantly. Required for gametogenesis and involved in selective gene expression of coding and non-coding RNAs needed for gametogenesis. Helps to define the distribution of nuclear pore complexes (NPCs). Required for efficient localization of SYNE4 in the nuclear envelope. May be involved in nuclear remodeling during sperm head formation in spermatogenesis. May play a role in DNA repair by suppressing non-homologous end joining repair to facilitate the repair of DNA cross-links. The polypeptide is SUN domain-containing protein 1 (Homo sapiens (Human)).